The primary structure comprises 186 residues: Cell division protein SepF (186 aa).

2 disordered regions span residues 14 to 59 (EHDE…NETS) and 157 to 186 (GRSQESNETSSSVSSDNFPTWGYETSRLAQ). Over residues 16-27 (DEYEEDYDEEME) the composition is skewed to acidic residues. The segment covering 159–171 (SQESNETSSSVSS) has biased composition (low complexity).

It belongs to the SepF family. In terms of assembly, homodimer. Interacts with FtsZ.

The protein localises to the cytoplasm. Functionally, cell division protein that is part of the divisome complex and is recruited early to the Z-ring. Probably stimulates Z-ring formation, perhaps through the cross-linking of FtsZ protofilaments. Its function overlaps with FtsA. The sequence is that of Cell division protein SepF from Synechocystis sp. (strain ATCC 27184 / PCC 6803 / Kazusa).